Here is a 117-residue protein sequence, read N- to C-terminus: Zinc metalloproteinase/disintegrin (117 aa).

Residues 36–117 enclose the Disintegrin domain; sequence TPVSGNELLE…AGCPRNPFHA (82 aa). 6 disulfides stabilise this stretch: Cys-50/Cys-65, Cys-52/Cys-60, Cys-59/Cys-82, Cys-73/Cys-79, Cys-78/Cys-103, and Cys-91/Cys-110. A Cell attachment site motif is present at residues 95–97; the sequence is RGD.

The protein belongs to the venom metalloproteinase (M12B) family. P-II subfamily. P-IIa sub-subfamily. In terms of assembly, monomer. The cofactor is Zn(2+). In terms of tissue distribution, expressed by the venom gland.

The protein localises to the secreted. In terms of biological role, impairs hemostasis in the envenomed animal. Inhibits platelet aggregation and bone resorption. The protein is Zinc metalloproteinase/disintegrin of Gloydius halys (Chinese water mocassin).